Consider the following 380-residue polypeptide: Cytochrome b (380 aa).

Transmembrane regions (helical) follow at residues 34-54, 78-99, 114-134, and 179-199; these read FGSLLGLCLVSQILTGLFLAM, WLLRNLHANGASFMFICLYMHI, WNIGVMLLVLTMATAFLGYVL, and FFAFHFFLPFMIAGLSVVHLL. Heme b-binding residues include histidine 84 and histidine 98. The heme b site is built by histidine 183 and histidine 197. Residue histidine 202 coordinates a ubiquinone. 4 helical membrane-spanning segments follow: residues 227-247, 289-309, 321-341, and 348-368; these read YKDVVGFVVLLAGLVFIALFS, LGGVVALAMSIVVLFFMPFVH, LAQVLFWLMVVNVLLLTWLGG, and YIFLGQAASVIYFVNILLLIP.

The protein belongs to the cytochrome b family. The cytochrome bc1 complex contains 3 respiratory subunits (MT-CYB, CYC1 and UQCRFS1), 2 core proteins (UQCRC1 and UQCRC2) and probably 6 low-molecular weight proteins. Heme b serves as cofactor.

It localises to the mitochondrion inner membrane. Its function is as follows. Component of the ubiquinol-cytochrome c reductase complex (complex III or cytochrome b-c1 complex) that is part of the mitochondrial respiratory chain. The b-c1 complex mediates electron transfer from ubiquinol to cytochrome c. Contributes to the generation of a proton gradient across the mitochondrial membrane that is then used for ATP synthesis. This Branchiostoma floridae (Florida lancelet) protein is Cytochrome b (MT-CYB).